We begin with the raw amino-acid sequence, 605 residues long: Indole-3-acetic acid-amido synthetase GH3.8 (605 aa).

Residues Ser115, 342 to 346, Tyr365, Asp421, and Arg440 each bind AMP; that span reads MYASS.

This sequence belongs to the IAA-amido conjugating enzyme family. Expressed in the inner floral organs (lodicules, stamens and carpels) and at lower levels in lemmas and paleas.

Catalyzes the synthesis of indole-3-acetic acid (IAA)-amino acid conjugates, providing a mechanism for the plant to cope with the presence of excessive free auxin. Produces more IAA-Asp levels than IAA-Ala levels in vitro. May participate in the activation of disease resistance by preventing the accumulation of free IAA, which reduces the expression of a group of auxin-responsive genes encoding expansins that control cell wall loosening and expansion. Contributes to late events in stamen and carpel differentiation, and influences floret fertility. The chain is Indole-3-acetic acid-amido synthetase GH3.8 (GH3.8) from Oryza sativa subsp. indica (Rice).